A 441-amino-acid chain; its full sequence is Ribosomal protein uS12 methylthiotransferase RimO (441 aa).

An MTTase N-terminal domain is found at 6–116 (QKVGIVSLGC…VVAAVHEAAP (111 aa)). Cys-15, Cys-51, Cys-80, Cys-147, Cys-151, and Cys-154 together coordinate [4Fe-4S] cluster. Residues 133–370 (LTPRHYAYLK…MAAQQEISER (238 aa)) enclose the Radical SAM core domain. Residues 373–439 (AQKVGTVIEA…EYDLWGSLAG (67 aa)) enclose the TRAM domain.

It belongs to the methylthiotransferase family. RimO subfamily. [4Fe-4S] cluster is required as a cofactor.

It is found in the cytoplasm. The catalysed reaction is L-aspartate(89)-[ribosomal protein uS12]-hydrogen + (sulfur carrier)-SH + AH2 + 2 S-adenosyl-L-methionine = 3-methylsulfanyl-L-aspartate(89)-[ribosomal protein uS12]-hydrogen + (sulfur carrier)-H + 5'-deoxyadenosine + L-methionine + A + S-adenosyl-L-homocysteine + 2 H(+). In terms of biological role, catalyzes the methylthiolation of an aspartic acid residue of ribosomal protein uS12. The polypeptide is Ribosomal protein uS12 methylthiotransferase RimO (Rhodospirillum rubrum (strain ATCC 11170 / ATH 1.1.1 / DSM 467 / LMG 4362 / NCIMB 8255 / S1)).